The primary structure comprises 245 residues: RNA polymerase sigma factor SigI5 (245 aa).

A Polymerase core binding motif is present at residues Asp-60–Ile-73. A DNA-binding region (H-T-H motif) is located at residues Met-202–Ala-221.

It belongs to the sigma-70 factor family. SigI subfamily. Interacts with RsgI5.

Its subcellular location is the cytoplasm. With respect to regulation, negatively regulated by the anti-sigma-I factor RsgI5. Binding of the polysaccharide substrate to RsgI5 may lead to the release and activation of SigI5. Sigma factors are initiation factors that promote the attachment of RNA polymerase to specific initiation sites and are then released. This sigma factor is involved in regulation of cellulosomal genes via an external polysaccharide-sensing mechanism. This is RNA polymerase sigma factor SigI5 from Acetivibrio thermocellus (strain ATCC 27405 / DSM 1237 / JCM 9322 / NBRC 103400 / NCIMB 10682 / NRRL B-4536 / VPI 7372) (Clostridium thermocellum).